A 182-amino-acid polypeptide reads, in one-letter code: Probable pyruvoyl-dependent arginine decarboxylase (182 aa).

Ser43 carries the pyruvic acid (Ser) modification.

The protein belongs to the PdaD family. It depends on pyruvate as a cofactor.

The catalysed reaction is L-arginine + H(+) = agmatine + CO2. In Chloroherpeton thalassium (strain ATCC 35110 / GB-78), this protein is Probable pyruvoyl-dependent arginine decarboxylase.